The following is a 477-amino-acid chain: Cytochrome c-552 (477 aa).

The N-terminal stretch at 1–26 is a signal peptide; it reads MVRISTSISYLWGMVASLFLMMPAYS. Heme c is bound at residue His-94. Cys-122, Cys-125, and Lys-126 together coordinate heme. The heme c site is built by Cys-160, Cys-163, His-164, Cys-209, Cys-212, and His-213. Ca(2+) is bound by residues Glu-215, Tyr-216, Lys-261, and Gln-263. Tyr-216 contacts substrate. His-264 provides a ligand contact to substrate. His-275, Cys-282, Cys-285, His-286, His-301, Cys-314, Cys-317, His-318, and His-393 together coordinate heme c.

Belongs to the cytochrome c-552 family. It depends on Ca(2+) as a cofactor. Requires heme c as cofactor.

The protein localises to the periplasm. It catalyses the reaction 6 Fe(III)-[cytochrome c] + NH4(+) + 2 H2O = 6 Fe(II)-[cytochrome c] + nitrite + 8 H(+). It participates in nitrogen metabolism; nitrate reduction (assimilation). Functionally, catalyzes the reduction of nitrite to ammonia, consuming six electrons in the process. This Pectobacterium carotovorum subsp. carotovorum (strain PC1) protein is Cytochrome c-552.